The chain runs to 3010 residues: Genome polyprotein (3010 aa).

S2 bears the N-acetylserine; by host mark. Positions 2-23 (STNPKPQRKTKRNTYRRPQDVK) are interaction with STAT1. Positions 2–58 (STNPKPQRKTKRNTYRRPQDVKFPGGGQIVGGVYVLPRRGPTLGVRATRKTSERSQP) are interaction with EIF2AK2/PKR. Residues 2 to 59 (STNPKPQRKTKRNTYRRPQDVKFPGGGQIVGGVYVLPRRGPTLGVRATRKTSERSQPR) are interaction with DDX3X. The interval 2–75 (STNPKPQRKT…PKARRPEGRA (74 aa)) is disordered. Residues 2 to 168 (STNPKPQRKT…EDGVNYATGN (167 aa)) are Cytoplasmic-facing. Short sequence motifs (nuclear localization signal) lie at residues 5 to 13 (PKPQRKTKR) and 38 to 43 (PRRGPT). Basic residues predominate over residues 7 to 16 (PQRKTKRNTY). S53 carries the post-translational modification Phosphoserine; by host. 2 consecutive short sequence motifs (nuclear localization signal) follow at residues 58–64 (PRGRRQP) and 66–71 (PKARRP). Residues 58-68 (PRGRRQPIPKA) are compositionally biased toward basic residues. A Phosphoserine; by host modification is found at S99. An important for endoplasmic reticulum and mitochondrial localization region spans residues 112–152 (PRRRSRNLGKVIDTLTCGFADLMGYIPLVGAPLGGAARALA). Residue S116 is modified to Phosphoserine; by host PKA. The interaction with APOA2 stretch occupies residues 122 to 173 (VIDTLTCGFADLMGYIPLVGAPLGGAARALAHGVRVLEDGVNYATGNLPGCS). Residues 164–167 (YATG) are important for lipid droplets localization. A helical transmembrane segment spans residues 169 to 189 (LPGCSFSIFLLALLSCLTIPA). A propeptide spans 178 to 191 (LLALLSCLTIPASA) (ER anchor for the core protein, removed in mature form by host signal peptidase). Over 190–358 (SAYQVRNASG…AGAHWGVLAG (169 aa)) the chain is Lumenal. N-linked (GlcNAc...) asparagine; by host glycans are attached at residues N196, N209, N234, and N250. The interval 265-296 (LVGAAAFCSAMYVGDLCGSVFLVSQLFTFSPR) is important for fusion. Residue N305 is glycosylated (N-linked (GlcNAc...) asparagine; by host). Residues 359–379 (LAYYSMVGNWAKVLIVMLLFA) form a helical membrane-spanning segment. Topologically, residues 380 to 725 (GVDGVTYTTG…WEYIVLLFLL (346 aa)) are lumenal. The tract at residues 385–411 (TYTTGGSQARHTQSVTSFFTQGPAQRI) is HVR1. 4 N-linked (GlcNAc...) (high mannose) asparagine; by host glycosylation sites follow: N417, N423, N430, and N448. Intrachain disulfides connect C429–C552, C452–C459, C486–C494, and C503–C508. The segment at 474-479 (YTEPRD) is HVR2. The segment at 480–493 (LDQRPYCWHYAPRQ) is CD81-binding 1. The N-linked (GlcNAc...) (high mannose) asparagine; by host glycan is linked to N532. The N-linked (GlcNAc...) asparagine; by host glycan is linked to N540. The interval 544–551 (PPQGNWFG) is CD81-binding 2. N556 carries N-linked (GlcNAc...) (high mannose) asparagine; by host glycosylation. C564 and C569 are disulfide-bonded. N-linked (GlcNAc...) (high mannose) asparagine; by host glycosylation occurs at N576. Intrachain disulfides connect C581–C585, C597–C620, and C607–C644. Residues N623 and N645 are each glycosylated (N-linked (GlcNAc...) (high mannose) asparagine; by host). An intrachain disulfide couples C652 to C677. The PKR/eIF2-alpha phosphorylation homology domain (PePHD) stretch occupies residues 660-671 (SELSPLLLSTTE). A helical transmembrane segment spans residues 726 to 746 (LADARVCACLWMMLLIAQAEA). Topologically, residues 747-757 (ALENLVVLNAA) are lumenal. A helical transmembrane segment spans residues 758–778 (SLAGADGILSFLVFFCAAWYI). Topologically, residues 779 to 781 (KGR) are cytoplasmic. A helical membrane pass occupies residues 782 to 803 (LVPGAAYALYGVWPLLLLLLAL). The Lumenal portion of the chain corresponds to 804 to 813 (PPRAYAMDRE). A helical membrane pass occupies residues 814 to 834 (MAASCGGVVFVGLILLTLSPH). Over 835 to 838 (YKVF) the chain is Cytoplasmic. The chain crosses the membrane as a helical span at residues 839–859 (LARLIWWLQYFITRAEAHLCV). The Lumenal segment spans residues 860-881 (WVPPLNVRGGRDAIILLTCAAH). The chain crosses the membrane as a helical span at residues 882 to 902 (PELIFDITKLLLAILGPLMVL). The region spanning 903–1026 (QAAITAMPYF…SIEGQGWRLL (124 aa)) is the Peptidase C18 domain. Over 903–1657 (QAAITAMPYF…CMSADLEVVT (755 aa)) the chain is Cytoplasmic. The interval 904-1206 (AAITAMPYFV…PVESMETTMR (303 aa)) is protease NS2-3. C922 carries S-palmitoyl cysteine; by host lipidation. The segment at 929–949 (AGGHYVQMAFMKLAALTGTYV) is interaction with host SCPS1. Active-site for protease NS2 activity; shared with dimeric partner residues include H952, E972, and C993. Residues 1027 to 1208 (APITAYAQQT…ESMETTMRSP (182 aa)) form the Peptidase S29 domain. Active-site charge relay system; for serine protease NS3 activity residues include H1083 and D1107. Zn(2+) is bound by residues C1123 and C1125. The active-site Charge relay system; for serine protease NS3 activity is S1165. Zn(2+) contacts are provided by C1171 and H1175. A Helicase ATP-binding domain is found at 1217-1369 (PAVPQTFQVA…PNIEEVALSN (153 aa)). 1230–1237 (APTGSGKS) contacts ATP. Residues S1237 and E1317 each contribute to the Mg(2+) site. Positions 1316–1319 (DECH) match the DECH box motif. The tract at residues 1486–1497 (QRRGRTGRGRGG) is RNA-binding. The helical transmembrane segment at 1658 to 1678 (STWVLVGGVLAALAAYCLTTG) threads the bilayer. The NS3-binding stretch occupies residues 1679–1690 (SVVIVGRIILSG). Residues 1679 to 1805 (SVVIVGRIIL…SITSPLTTQN (127 aa)) lie on the Cytoplasmic side of the membrane. Residues 1806–1824 (TLLFNILGGWVAAQLAPPS) form a helical membrane-spanning segment. The Lumenal portion of the chain corresponds to 1825–1828 (AASA). Residues 1829 to 1849 (FVGAGIAGAAIGSIGLGKVLV) traverse the membrane as a helical segment. D1850 is a topological domain (cytoplasmic). The helical transmembrane segment at 1851–1871 (ILAGYGAGVAGALVAFKVMSG) threads the bilayer. Topologically, residues 1872-1881 (EAPSAEDLVN) are lumenal. A helical membrane pass occupies residues 1882–1902 (LLPAILSPGALVVGVVCAAIL). Residues 1903–1972 (RRHVGPGEGA…WINEDCSTPC (70 aa)) are Cytoplasmic-facing. S-palmitoyl cysteine; by host attachment occurs at residues C1968 and C1972. An intramembrane segment occupies 1973–2002 (SGSWLKDVWDWICTVLTDFKTWLQSKLLPK). Residues 2003-2989 (LPGVPFFSCQ…YHSLSRARPR (987 aa)) are Cytoplasmic-facing. Residues C2011, C2029, C2031, and C2052 each coordinate Zn(2+). An FKBP8-binding region spans residues 2120-2208 (EFFTELDGVR…ASSSASQLSA (89 aa)). Residues 2120 to 2332 (EFFTELDGVR…PIPPPRKKRT (213 aa)) form a transcriptional activation region. Residues 2135–2139 (PACRP) are interaction with non-structural protein 4A. Positions 2187 to 2220 (KRRLARGSPPSLASSSASQLSAPSLKATCTTHHD) are disordered. The segment at 2189 to 2441 (RLARGSPPSL…PCAAEESKLP (253 aa)) is interaction with host SKP2. The residue at position 2194 (S2194) is a Phosphoserine; by host; in p56. The span at 2194 to 2211 (SPPSLASSSASQLSAPSL) shows a compositional bias: low complexity. A phosphoserine; by host; in p58 mark is found at S2197, S2201, S2204, S2207, and S2210. Residues 2210 to 2249 (SLKATCTTHHDSPDADLIEANLLWRQEMGGNITRVESENK) form an ISDR region. Positions 2210–2275 (SLKATCTTHH…REVSVAAEIL (66 aa)) are interaction with EIF2AK2/PKR. An NS4B-binding region spans residues 2249 to 2306 (KVVILDSFDPLRAEEDEREVSVAAEILRKSKKFPPALPIWARPDYNPPLLESWKSPDY). The SH3-binding signature appears at 2322–2325 (PPIP). The short motif at 2326-2334 (PPRKKRTVV) is the Nuclear localization signal element. A Glycyl lysine isopeptide (Lys-Gly) (interchain with G-Cter in ubiquitin) cross-link involves residue K2350. Over residues 2351–2371 (TFGSSGSSAVDSGTATAPPDQ) the composition is skewed to polar residues. The disordered stretch occupies residues 2351-2408 (TFGSSGSSAVDSGTATAPPDQTSDDGDKESDVESYSSMPPLEGEPGDPDLSDGSWSTV). The tract at residues 2354 to 2377 (SSGSSAVDSGTATAPPDQTSDDGD) is V3. The segment covering 2372–2382 (TSDDGDKESDV) has biased composition (acidic residues). 2 positions are modified to phosphoserine; by host: S2448 and S2461. The 119-residue stretch at 2633–2751 (PMGFSYDTRC…ICESAGTQED (119 aa)) folds into the RdRp catalytic domain. Residues D2639, D2737, and D2738 each coordinate Mg(2+). A helical membrane pass occupies residues 2990-3010 (WFMWCLLLLSVGVGIYLLPNR).

This sequence belongs to the hepacivirus polyprotein family. In terms of assembly, homooligomer. Interacts with E1 (via C-terminus). Interacts with the non-structural protein 5A. Interacts (via N-terminus) with host STAT1 (via SH2 domain); this interaction results in decreased STAT1 phosphorylation and ubiquitin-mediated proteasome-dependent STAT1 degradation, leading to decreased IFN-stimulated gene transcription. Interacts with host STAT3; this interaction constitutively activates STAT3. Interacts with host LTBR receptor. Interacts with host TNFRSF1A receptor and possibly induces apoptosis. Interacts with host HNRPK. Interacts with host YWHAE. Interacts with host UBE3A/E6AP. Interacts with host DDX3X. Interacts with host APOA2. Interacts with host RXRA protein. Interacts with host SP110 isoform 3/Sp110b; this interaction sequesters the transcriptional corepressor SP110 away from the nucleus. Interacts with host CREB3 nuclear transcription protein; this interaction triggers cell transformation. Interacts with host ACY3. Interacts with host C1QR1. Interacts with host RBM24; this interaction, which enhances the interaction of the mature core protein with 5'-UTR, may inhibit viral translation and favor replication. Interacts with host EIF2AK2/PKR; this interaction induces the autophosphorylation of EIF2AK2. Part of the viral assembly initiation complex composed of NS2, E1, E2, NS3, NS4A, NS5A and the mature core protein. As to quaternary structure, forms a heterodimer with envelope glycoprotein E2. Interacts with mature core protein. Interacts with protease NS2. The heterodimer E1/E2 interacts with host CLDN1; this interaction plays a role in viral entry into host cell. Interacts with host SPSB2 (via C-terminus). Part of the viral assembly initiation complex composed of NS2, E1, E2, NS3, NS4A, NS5A and the mature core protein. Interacts with host NEURL3; this interaction prevents E1 binding to glycoprotein E2. Forms a heterodimer with envelope glycoprotein E1. Interacts with host CD81 and SCARB1 receptors; these interactions play a role in viral entry into host cell. Interacts with host EIF2AK2/PKR; this interaction inhibits EIF2AK2 and probably allows the virus to evade the innate immune response. Interacts with host CD209/DC-SIGN and CLEC4M/DC-SIGNR. Interact with host SPCS1; this interaction is essential for viral particle assembly. Interacts with protease NS2. The heterodimer E1/E2 interacts with host CLDN1; this interaction plays a role in viral entry into host cell. Part of the viral assembly initiation complex composed of NS2, E1, E2, NS3, NS4A, NS5A and the mature core protein. Interacts with host SLC3A2/4F2hc; the interaction may facilitate viral entry into host cell. Interacts with human PLSCR1. In terms of assembly, homohexamer. Homoheptamer. Interacts with protease NS2. As to quaternary structure, homodimer. Interacts with host SPCS1; this interaction is essential for viral particle assembly. Interacts with envelope glycoprotein E1. Interacts with envelope glycoprotein E2. Interacts with viroporin p7. Interacts with serine protease/helicase NS3. Part of the replication complex composed of NS2, NS3, NS4A, NS4B, NS5A and the RNA-directed RNA polymerase embedded in an ER-derived membranous web. Part of the viral assembly initiation complex composed of NS2, E1, E2, NS3, NS4A, NS5A and the mature core protein. Interacts with protease NS2. Interacts with non-structural protein 4A; this interaction stabilizes the folding of NS3 serine protease. NS3-NS4A interaction is essential for NS3 activation and allows membrane anchorage of the latter. NS3/NS4A complex also prevents phosphorylation of host IRF3, thus preventing the establishment of dsRNA induced antiviral state. Interacts with host MAVS; this interaction leads to the cleavage and inhibition of host MAVS. Interacts with host TICAM1; this interaction leads to the cleavage and inhibition of host TICAM1. Interacts with host TANK-binding kinase/TBK1; this interaction results in the inhibition of the association between TBK1 and IRF3, which leads to the inhibition of IRF3 activation. Interacts with host RBM24. Part of the replication complex composed of NS2, NS3, NS4A, NS4B, NS5A and the RNA-directed RNA polymerase embedded in an ER-derived membranous web. Part of the viral assembly initiation complex composed of NS2, E1, E2, NS3, NS4A, NS5A and the mature core protein. In terms of assembly, interacts with NS3 serine protease; this interaction stabilizes the folding of NS3 serine protease. NS3-NS4A interaction is essential for NS3 activation and allows membrane anchorage of the latter. Interacts with non-structural protein 5A (via N-terminus). Part of the replication complex composed of NS2, NS3, NS4A, NS4B, NS5A and the RNA-directed RNA polymerase embedded in an ER-derived membranous web. Part of the viral assembly initiation complex composed of NS2, E1, E2, NS3, NS4A, NS5A and the mature core protein. As to quaternary structure, homomultimer. Interacts with non-structural protein NS5A. Interacts with host PLA2G4C; this interaction likely initiates the recruitment of replication complexes to lipid droplets. Interacts with host STING; this interaction disrupts the interaction between STING and TBK1 thereby suppressing the interferon signaling. Part of the replication complex composed of NS2, NS3, NS4A, NS4B, NS5A and the RNA-directed RNA polymerase embedded in an ER-derived membranous web. Monomer. Homodimer; dimerization is required for RNA-binding. Interacts with the mature core protein. Interacts (via N-terminus) with non-structural protein 4A. Interacts with non-structural protein 4B. Interacts (via region D2) with RNA-directed RNA polymerase. Part of the viral assembly initiation complex composed of NS2, E1, E2, NS3, NS4A, NS5A and the mature core protein. Part of the replication complex composed of NS2, NS3, NS4A, NS4B, NS5A and the RNA-directed RNA polymerase embedded in an ER-derived membranous web. Interacts with host GRB2. Interacts with host BIN1. Interacts with host PIK3R1. Interacts with host SRCAP. Interacts with host FKBP8. Interacts (via C-terminus) with host VAPB (via MSP domain). Interacts with host EIF2AK2/PKR; this interaction leads to disruption of EIF2AK2 dimerization by NS5A and probably allows the virus to evade the innate immune response. Interacts (via N-terminus) with host PACSIN2 (via N-terminus); this interaction attenuates protein kinase C alpha-mediated phosphorylation of PACSIN2 by disrupting the interaction between PACSIN2 and PRKCA. Interacts (via N-terminus) with host SRC kinase (via SH2 domain). Interacts with most Src-family kinases. Interacts with host IFI27 and SKP2; promotes the ubiquitin-mediated proteasomal degradation of NS5A. Interacts with host GPS2. Interacts with host TNFRSF21; this interaction allows the modulation by the virus of JNK, p38 MAPK, STAT3, and Akt signaling pathways in a DR6-dependent manner. Interacts (via N-terminus) with host CIDEB (via N-terminus); this interaction seems to regulate the association of HCV particles with APOE. Interacts with host CHKA/Choline Kinase-alpha; CHKA bridges host PI4KA and NS5A and potentiates NS5A-stimulated PI4KA activity, which then facilitates the targeting of the ternary complex to the ER for viral replication. Interacts with host SPSB2 (via C-terminus); this interaction targets NS5A for ubiquitination and degradation. Interacts with host RAB18; this interaction may promote the association of NS5A and other replicase components with lipid droplets. Interacts (via region D2) with host PPIA/CYPA; the interaction stimulates RNA-binding ability of NS5A and is dependent on the peptidyl-prolyl cis-trans isomerase activity of PPIA/CYPA. Interacts with host TRIM14; this interaction induces the degradation of NS5A. In terms of assembly, homooligomer. Interacts with non-structural protein 5A. Interacts with host VAPB. Interacts with host PRK2/PKN2. Interacts with host HNRNPA1 and SEPT6; these interactions facilitate viral replication. Part of the replication complex composed of NS2, NS3, NS4A, NS4B, NS5A and the RNA-directed RNA polymerase. Requires Zn(2+) as cofactor. Mg(2+) is required as a cofactor. In terms of processing, specific enzymatic cleavages in vivo yield mature proteins. The structural proteins, core, E1, E2 and p7 are produced by proteolytic processing by host signal peptidases. The core protein precursor is synthesized as a 23 kDa, which is retained in the ER membrane through the hydrophobic signal peptide. Cleavage by the signal peptidase releases the 21 kDa mature core protein. The cleavage of the core protein precursor occurs between aminoacids 176 and 188 but the exact cleavage site is not known. Some degraded forms of the core protein appear as well during the course of infection. The other proteins (p7, NS2, NS3, NS4A, NS4B, NS5A and NS5B) are cleaved by the viral proteases. Autoprocessing between NS2 and NS3 is mediated by the NS2 cysteine protease catalytic domain and regulated by the NS3 N-terminal domain. Post-translationally, phosphorylated by host PKC and PKA. Ubiquitinated; mediated by UBE3A and leading to core protein subsequent proteasomal degradation. In terms of processing, highly N-glycosylated. Post-translationally, palmitoylation is required for NS2/3 autoprocessing and E2 recruitment to membranes. Palmitoylated. This modification may play a role in its polymerization or in protein-protein interactions. In terms of processing, phosphorylated on serines in a basal form termed p56. p58 is a hyperphosphorylated form of p56. p56 and p58 coexist in the cell in roughly equivalent amounts. Hyperphosphorylation is dependent on the presence of NS4A. Host CSNK1A1/CKI-alpha or RPS6KB1 kinases may be responsible for NS5A phosphorylation. Post-translationally, tyrosine phosphorylation is essential for the interaction with host SRC. Ubiquitinated. Ubiquitination, most probably at Lys-2350, mediated by host IFI27 and SKP2 leads to proteasomal degradation, restricting viral infection. Ubiquitination by host TRIM22 leads to interruption of viral replication. In terms of processing, the N-terminus is phosphorylated by host PRK2/PKN2.

The protein localises to the host endoplasmic reticulum membrane. Its subcellular location is the host mitochondrion membrane. It is found in the virion. The protein resides in the host cytoplasm. It localises to the host nucleus. The protein localises to the host lipid droplet. Its subcellular location is the virion membrane. It is found in the host mitochondrion. The protein resides in the host cell membrane. It localises to the host perinuclear region. It carries out the reaction Hydrolysis of four peptide bonds in the viral precursor polyprotein, commonly with Asp or Glu in the P6 position, Cys or Thr in P1 and Ser or Ala in P1'.. The catalysed reaction is a ribonucleoside 5'-triphosphate + H2O = a ribonucleoside 5'-diphosphate + phosphate + H(+). It catalyses the reaction ATP + H2O = ADP + phosphate + H(+). The enzyme catalyses RNA(n) + a ribonucleoside 5'-triphosphate = RNA(n+1) + diphosphate. Its activity is regulated as follows. Inhibited by the antiviral drug hexamethylene amiloride. Inhibition by amantadine appears to be genotype-dependent. Also inhibited by long-alkyl-chain iminosugar derivatives. With respect to regulation, activity is up-regulated by PRK2/PKN2-mediated phosphorylation. In terms of biological role, packages viral RNA to form a viral nucleocapsid, and promotes virion budding. Participates in the viral particle production as a result of its interaction with the non-structural protein 5A. Binds RNA and may function as a RNA chaperone to induce the RNA structural rearrangements taking place during virus replication. Modulates viral translation initiation by interacting with viral IRES and 40S ribosomal subunit. Affects various cell signaling pathways, host immunity and lipid metabolism. Prevents the establishment of cellular antiviral state by blocking the interferon-alpha/beta (IFN-alpha/beta) and IFN-gamma signaling pathways and by blocking the formation of phosphorylated STAT1 and promoting ubiquitin-mediated proteasome-dependent degradation of STAT1. Activates STAT3 leading to cellular transformation. Regulates the activity of cellular genes, including c-myc and c-fos. May repress the promoter of p53, and sequester CREB3 and SP110 isoform 3/Sp110b in the cytoplasm. Represses cell cycle negative regulating factor CDKN1A, thereby interrupting an important check point of normal cell cycle regulation. Targets transcription factors involved in the regulation of inflammatory responses and in the immune response: suppresses TNF-induced NF-kappa-B activation, and activates AP-1. Binds to dendritic cells (DCs) via C1QR1, resulting in down-regulation of T-lymphocytes proliferation. Alters lipid metabolism by interacting with hepatocellular proteins involved in lipid accumulation and storage. Induces up-regulation of FAS promoter activity, and thereby contributes to the increased triglyceride accumulation in hepatocytes (steatosis). Functionally, forms a heterodimer with envelope glycoprotein E2, which mediates virus attachment to the host cell, virion internalization through clathrin-dependent endocytosis and fusion with host membrane. Fusion with the host cell is most likely mediated by both E1 and E2, through conformational rearrangements of the heterodimer required for fusion rather than a classical class II fusion mechanism. E1/E2 heterodimer binds host apolipoproteins such as APOB and ApoE thereby forming a lipo-viro-particle (LVP). APOE associated to the LVP allows the initial virus attachment to cell surface receptors such as the heparan sulfate proteoglycans (HSPGs), syndecan-1 (SDC1), syndecan-1 (SDC2), the low-density lipoprotein receptor (LDLR) and scavenger receptor class B type I (SCARB1). The cholesterol transfer activity of SCARB1 allows E2 exposure and binding of E2 to SCARB1 and the tetraspanin CD81. E1/E2 heterodimer binding on CD81 activates the epithelial growth factor receptor (EGFR) signaling pathway. Diffusion of the complex E1-E2-EGFR-SCARB1-CD81 to the cell lateral membrane allows further interaction with Claudin 1 (CLDN1) and occludin (OCLN) to finally trigger HCV entry. Forms a heterodimer with envelope glycoprotein E1, which mediates virus attachment to the host cell, virion internalization through clathrin-dependent endocytosis and fusion with host membrane. Fusion with the host cell is most likely mediated by both E1 and E2, through conformational rearrangements of the heterodimer required for fusion rather than a classical class II fusion mechanism. The interaction between envelope glycoprotein E2 and host apolipoprotein E/APOE allows the proper assembly, maturation and infectivity of the viral particles. This interaction is probably promoted via the up-regulation of cellular autophagy by the virus. E1/E2 heterodimer binds host apolipoproteins such as APOB and APOE thereby forming a lipo-viro-particle (LVP). APOE associated to the LVP allows the initial virus attachment to cell surface receptors such as the heparan sulfate proteoglycans (HSPGs), syndecan-1 (SDC1), syndecan-1 (SDC2), the low-density lipoprotein receptor (LDLR) and scavenger receptor class B type I (SCARB1). The cholesterol transfer activity of SCARB1 allows E2 exposure and binding of E2 to SCARB1 and the tetraspanin CD81. E1/E2 heterodimer binding on CD81 activates the epithelial growth factor receptor (EGFR) signaling pathway. Diffusion of the complex E1-E2-EGFR-SCARB1-CD81 to the cell lateral membrane allows further interaction with Claudin 1 (CLDN1) and occludin (OCLN) to finally trigger HCV entry. Inhibits host EIF2AK2/PKR activation, preventing the establishment of an antiviral state. Viral ligand for CD209/DC-SIGN and CLEC4M/DC-SIGNR, which are respectively found on dendritic cells (DCs), and on liver sinusoidal endothelial cells and macrophage-like cells of lymph node sinuses. These interactions allow the capture of circulating HCV particles by these cells and subsequent facilitated transmission to permissive cells such as hepatocytes and lymphocyte subpopulations. The interaction between E2 and host amino acid transporter complex formed by SLC3A2 and SLC7A5/LAT1 may facilitate viral entry into host cell. Its function is as follows. Ion channel protein that acts as a viroporin and plays an essential role in the assembly, envelopment and secretion of viral particles. Regulates the host cell secretory pathway, which induces the intracellular retention of viral glycoproteins and favors assembly of viral particles. Creates a pore in acidic organelles and releases Ca(2+) and H(+) in the cytoplasm of infected cells, leading to a productive viral infection. High levels of cytoplasmic Ca(2+) may trigger membrane trafficking and transport of viral ER-associated proteins to viroplasms, sites of viral genome replication. This ionic imbalance induces the assembly of the inflammasome complex, which triggers the maturation of pro-IL-1beta into IL-1beta through the action of caspase-1. Targets also host mitochondria and induces mitochondrial depolarization. In addition of its role as a viroporin, acts as a lipid raft adhesion factor. In terms of biological role, cysteine protease required for the proteolytic auto-cleavage between the non-structural proteins NS2 and NS3. The N-terminus of NS3 is required for the function of NS2 protease (active region NS2-3). Promotes the initiation of viral particle assembly by mediating the interaction between structural and non-structural proteins. Functionally, displays three enzymatic activities: serine protease with a chymotrypsin-like fold, NTPase and RNA helicase. NS3 serine protease, in association with NS4A, is responsible for the cleavages of NS3-NS4A, NS4A-NS4B, NS4B-NS5A and NS5A-NS5B. The NS3/NS4A complex prevents phosphorylation of host IRF3, thus preventing the establishment of dsRNA induced antiviral state. The NS3/NS4A complex induces host amino acid transporter component SLC3A2, thus contributing to HCV propagation. NS3 RNA helicase binds to RNA and unwinds both dsDNA and dsRNA in the 3' to 5' direction, and likely resolves RNA complicated stable secondary structures in the template strand. Binds a single ATP and catalyzes the unzipping of a single base pair of dsRNA. Inhibits host antiviral proteins TBK1 and IRF3 thereby preventing the establishment of an antiviral state. Cleaves host MAVS/CARDIF thereby preventing the establishment of an antiviral state. Cleaves host TICAM1/TRIF, thereby disrupting TLR3 signaling and preventing the establishment of an antiviral state. Induces a specific membrane alteration that serves as a scaffold for the virus replication complex. This membrane alteration gives rise to the so-called ER-derived membranous web that contains the replication complex. NS4B self-interaction contributes to its function in membranous web formation. Promotes host TRIF protein degradation in a CASP8-dependent manner thereby inhibiting host TLR3-mediated interferon signaling. Disrupts the interaction between STING and TBK1 contributing to the inhibition of interferon signaling. Its function is as follows. Phosphorylated protein that is indispensable for viral replication and assembly. Both hypo- and hyperphosphorylated states are required for the viral life cycle. The hyperphosphorylated form of NS5A is an inhibitor of viral replication. Involved in RNA-binding and especially in binding to the viral genome. Zinc is essential for RNA-binding. Participates in the viral particle production as a result of its interaction with the mature viral core protein. Its interaction with host VAPB may target the viral replication complex to vesicles. Down-regulates viral IRES translation initiation. Mediates interferon resistance, presumably by interacting with and inhibiting host EIF2AK2/PKR. Prevents BIN1-induced apoptosis. Acts as a transcriptional activator of some host genes important for viral replication when localized in the nucleus. Via the interaction with host PACSIN2, modulates lipid droplet formation in order to promote virion assembly. Modulates TNFRSF21/DR6 signaling pathway for viral propagation. In terms of biological role, RNA-dependent RNA polymerase that performs primer-template recognition and RNA synthesis during viral replication. Initiates RNA transcription/replication at a flavin adenine dinucleotide (FAD), resulting in a 5'- FAD cap on viral RNAs. In this way, recognition of viral 5' RNA by host pattern recognition receptors can be bypassed, thereby evading activation of antiviral pathways. Functionally, peptide cofactor which forms a non-covalent complex with the N-terminal of NS3 serine protease. The NS3/NS4A complex prevents phosphorylation of host IRF3, thus preventing the establishment of dsRNA induced antiviral state. The NS3/NS4A complex induces host amino acid transporter component SLC3A2, thus contributing to HCV propagation. The protein is Genome polyprotein of Homo sapiens (Human).